A 134-amino-acid polypeptide reads, in one-letter code: Histone H3-like centromeric protein A (134 aa).

Basic residues predominate over residues 1–14; that stretch reads MGPRRKPQTPRRRP. A disordered region spans residues 1–34; it reads MGPRRKPQTPRRRPSSPAPGPSRQSSSVGSQTLR. At glycine 2 the chain carries N,N,N-trimethylglycine. 2 positions are modified to phosphoserine: serine 16 and serine 22. The important for flexibility of DNA ends that protrude from nucleosomes stretch occupies residues 34-48; the sequence is RRRQKFMWLKEIKTL. An H3-like region spans residues 35 to 134; that stretch reads RRQKFMWLKE…RIRGFEGGLP (100 aa). Phosphoserine is present on serine 62. The tract at residues 69-110 is CATD; it reads CEKFSRGVDFWWQAQALLALQEAAEAFLIHLFEDAYLLSLHA.

Belongs to the histone H3 family. Component of centromeric nucleosomes, where DNA is wrapped around a histone octamer core. The octamer contains two molecules each of H2A, H2B, CENPA and H4 assembled in one CENPA-H4 heterotetramer and two H2A-H2B heterodimers. CENPA modulates the DNA-binding characteristics of nucleosomes so that protruding DNA ends have higher flexibility than in nucleosomes containing conventional histone H3. Inhibits binding of histone H1 to nucleosomes, since histone H1 binds preferentially to rigid DNA linkers that protrude from nucleosomes. Nucleosomes containing CENPA also contain histone H2A variants such as MACROH2A and H2A.Z/H2AZ1. The CENPA-H4 heterotetramer is more compact and structurally more rigid than corresponding H3-H4 heterotetramers. Can assemble into nucleosomes that contain both CENPA and histone H3.3; these nucleosomes interact with a single CENPC chain. Heterotrimer composed of HJURP, CENPA and histone H4, where HJURP interacts with the dimer formed by CENPA and histone H4 and prevents tetramerization of CENPA and H4. Component of the CENPA-NAC complex, at least composed of CENPA, CENPC, CENPH, CENPM, CENPN, CENPT and CENPU. Interacts (via CATD domain) with HJURP; the interaction is direct and is required for its localization to centromeres. Interacts with CENPC, CENPN and CENPT; interaction is direct. Part of a centromere complex consisting of CENPA, CENPT and CENPW. Identified in centromere complexes containing histones H2A, H2B and H4, and at least CENPA, CENPB, CENPC, CENPT, CENPN, HJURP, SUPT16H, SSRP1 and RSF1. Can self-associate. The CENPA-H4 heterotetramer can bind DNA by itself (in vitro). Interacts with CDK1, PPP1CA and RBBP7. Poly-ADP-ribosylated by PARP1. Post-translationally, trimethylated by NTMT1 at the N-terminal glycine after cleavage of Met-1. Methylation is low before incorporation into nucleosomes and increases with cell cycle progression, with the highest levels in mitotic nucleosomes. In terms of processing, phosphorylated by CDK1 at Ser-62 during early mitosis; this abolishes association with chromatin and centromeres, prevents interaction with HJURP and thereby prevents premature assembly of CENPA into centromeres. Dephosphorylated at Ser-62 by PPP1CA during late mitosis.

The protein resides in the nucleus. The protein localises to the chromosome. Its subcellular location is the centromere. In terms of biological role, histone H3-like nucleosomal protein that is specifically found in centromeric nucleosomes. Replaces conventional H3 in the nucleosome core of centromeric chromatin that serves as an assembly site for the inner kinetochore. The presence of CENPA subtly modifies the nucleosome structure and the way DNA is wrapped around the nucleosome and gives rise to protruding DNA ends that are less well-ordered and rigid compared to nucleosomes containing histone H3. May serve as an epigenetic mark that propagates centromere identity through replication and cell division. Required for recruitment and assembly of kinetochore proteins, and as a consequence required for progress through mitosis, chromosome segregation and cytokinesis. The sequence is that of Histone H3-like centromeric protein A (Cenpa) from Mus musculus (Mouse).